We begin with the raw amino-acid sequence, 130 residues long: Early E3B 14.5 kDa protein (130 aa).

Residues 1–19 (MKRIVTFVLLIFCALPVLC) form the signal peptide. Residues 53 to 77 (AWLYAIISVMVFCSTIFALAIYPYL) form a helical membrane-spanning segment.

It belongs to the adenoviridae E3_14 family. Phosphorylated on serine; O-glycosylated, but not N-glycosylated.

It is found in the host membrane. Functionally, down-regulates the EGF receptor and prevents cytolysis by TNF. This Human adenovirus C serotype 6 (HAdV-6) protein is Early E3B 14.5 kDa protein.